The sequence spans 218 residues: Putative glutamine transport system permease protein GlnP (218 aa).

Positions 19–208 (TLVTLKYSVI…ILVMLISFIA (190 aa)) constitute an ABC transmembrane type-1 domain. The next 4 membrane-spanning stretches (helical) occupy residues 25–45 (YSVIAVIFGLVIGMLLAICKV), 57–79 (FYTSIFRGTPLLIQLSIIYFASP), 86–108 (FSVFMAGAIAFSLNSGAYVSEVI), and 187–207 (FFPMLIAACCYYILVMLISFI).

The protein belongs to the binding-protein-dependent transport system permease family. HisMQ subfamily.

Its subcellular location is the cell inner membrane. Part of the binding-protein-dependent transport system for glutamine; probably responsible for the translocation of the substrate across the membrane. The sequence is that of Putative glutamine transport system permease protein GlnP (glnP) from Rickettsia conorii (strain ATCC VR-613 / Malish 7).